Here is a 1129-residue protein sequence, read N- to C-terminus: Serine/threonine-protein kinase 11-interacting protein (1129 aa).

8 LRR repeats span residues 107–128 (SLRS…RSVY), 130–150 (QLEV…IALC), 162–183 (VLHT…LELL), 185–206 (SLKI…LKVL), 208–229 (ELQY…SVGN), 232–253 (KLHS…ENLP), 254–275 (NLQH…SGLA), and 279–300 (NLKQ…RALT). Disordered stretches follow at residues 335 to 392 (RLQP…RRGQ), 428 to 475 (DPEY…HVAP), 654 to 678 (GDIY…NHTG), and 696 to 724 (NPTG…GLAA). A compositionally biased stretch (polar residues) spans 337–355 (QPSSSATESSCTGDLTDSY). Over residues 365-374 (LPRKKSRVKV) the composition is skewed to basic residues. The span at 381–391 (ERSDSEYERRG) shows a compositional bias: basic and acidic residues. The span at 436-447 (HSPPPRASPSPT) shows a compositional bias: pro residues. The segment covering 448–458 (APSSVPKQKSP) has biased composition (low complexity).

The protein belongs to the STK11IP family.

It localises to the cytoplasm. The polypeptide is Serine/threonine-protein kinase 11-interacting protein (stk11ip) (Xenopus tropicalis (Western clawed frog)).